A 496-amino-acid polypeptide reads, in one-letter code: Putative (R)-citramalate synthase CimA (496 aa).

The 251-residue stretch at Val-3–Tyr-253 folds into the Pyruvate carboxyltransferase domain.

Belongs to the alpha-IPM synthase/homocitrate synthase family. In terms of assembly, homodimer.

The catalysed reaction is pyruvate + acetyl-CoA + H2O = (3R)-citramalate + CoA + H(+). It participates in amino-acid biosynthesis; L-isoleucine biosynthesis; 2-oxobutanoate from pyruvate: step 1/3. Catalyzes the condensation of pyruvate and acetyl-coenzyme A to form (R)-citramalate. In Methanothermobacter thermautotrophicus (strain ATCC 29096 / DSM 1053 / JCM 10044 / NBRC 100330 / Delta H) (Methanobacterium thermoautotrophicum), this protein is Putative (R)-citramalate synthase CimA.